A 69-amino-acid polypeptide reads, in one-letter code: uncharacterized protein (69 aa).

Positions Leu-21–Lys-64 form a coiled coil.

This is an uncharacterized protein from Saccharomyces cerevisiae (strain ATCC 204508 / S288c) (Baker's yeast).